The chain runs to 342 residues: Protein-ribulosamine 3-kinase, chloroplastic (342 aa).

The N-terminal 46 residues, 1–46 (MANVALLSAASPSTSSAAPRLRHVARRRPSRRSACPRSAASRLSIM), are a transit peptide targeting the chloroplast. 141-143 (EFI) lines the ATP pocket. Aspartate 246 acts as the Proton acceptor in catalysis.

It belongs to the fructosamine kinase family.

It localises to the plastid. The protein resides in the chloroplast. It carries out the reaction N(6)-D-ribulosyl-L-lysyl-[protein] + ATP = N(6)-(3-O-phospho-D-ribulosyl)-L-lysyl-[protein] + ADP + H(+). It catalyses the reaction N(6)-(D-erythrulosyl)-L-lysyl-[protein] + ATP = N(6)-(3-O-phospho-D-erythrulosyl)-L-lysyl-[protein] + ADP + H(+). Functionally, initiates a process leading to the deglycation of proteins. Phosphorylates low-molecular-mass and protein-bound erythrulosamines and ribulosamines, but not fructosamines or psicosamines, on the third carbon of the sugar moiety. Protein-bound erythrulosamine 3-phosphates and ribulosamine 3-phosphates are unstable and decompose under physiological conditions. The sequence is that of Protein-ribulosamine 3-kinase, chloroplastic from Oryza sativa subsp. indica (Rice).